The sequence spans 475 residues: Ankyrin repeat, SAM and basic leucine zipper domain-containing protein 1 (475 aa).

The segment at 1–25 (MAASALRGLPVAGGGESSESEDDGW) is disordered. 3 positions are modified to phosphoserine: serine 17, serine 18, and serine 20. 6 ANK repeats span residues 45-74 (EKKE…SVDS), 78-107 (YGWT…NASF), 110-144 (DKQS…DPNV), 148-177 (RLMT…EVNT), 181-210 (NGYT…NKML), and 214-243 (DGKM…PLEG). The region spanning 272 to 334 (SYTAFGDLEV…KILAALKELQ (63 aa)) is the SAM domain.

In terms of assembly, interacts with DDX4, PIWIL1, RANBP9 and TDRD1.

Its subcellular location is the cytoplasm. Plays a central role during spermatogenesis by repressing transposable elements and preventing their mobilization, which is essential for the germline integrity. Acts via the piRNA metabolic process, which mediates the repression of transposable elements during meiosis by forming complexes composed of piRNAs and Piwi proteins and governs the methylation and subsequent repression of transposons. Its association with pi-bodies suggests a participation in the primary piRNAs metabolic process. Required prior to the pachytene stage to facilitate the production of multiple types of piRNAs, including those associated with repeats involved in the regulation of retrotransposons. May act by mediating protein-protein interactions during germ cell maturation. In Pan troglodytes (Chimpanzee), this protein is Ankyrin repeat, SAM and basic leucine zipper domain-containing protein 1 (ASZ1).